A 320-amino-acid chain; its full sequence is Aspartate carbamoyltransferase catalytic subunit (320 aa).

Carbamoyl phosphate contacts are provided by Arg70 and Thr71. Lys98 lines the L-aspartate pocket. Residues Arg120, His150, and Gln153 each coordinate carbamoyl phosphate. 2 residues coordinate L-aspartate: Arg184 and Arg239. Residues Gly280 and Pro281 each coordinate carbamoyl phosphate.

This sequence belongs to the aspartate/ornithine carbamoyltransferase superfamily. ATCase family. In terms of assembly, heterododecamer (2C3:3R2) of six catalytic PyrB chains organized as two trimers (C3), and six regulatory PyrI chains organized as three dimers (R2).

It catalyses the reaction carbamoyl phosphate + L-aspartate = N-carbamoyl-L-aspartate + phosphate + H(+). It functions in the pathway pyrimidine metabolism; UMP biosynthesis via de novo pathway; (S)-dihydroorotate from bicarbonate: step 2/3. In terms of biological role, catalyzes the condensation of carbamoyl phosphate and aspartate to form carbamoyl aspartate and inorganic phosphate, the committed step in the de novo pyrimidine nucleotide biosynthesis pathway. This is Aspartate carbamoyltransferase catalytic subunit from Xylella fastidiosa (strain Temecula1 / ATCC 700964).